An 891-amino-acid polypeptide reads, in one-letter code: von Willebrand factor A domain-containing protein 7 (891 aa).

Positions 1–28 are cleaved as a signal peptide; it reads MLPTEVPQSHPGPSALLLLQLLLPPTSA. N-linked (GlcNAc...) asparagine glycosylation is present at Asn55. Positions 237–272 are disordered; sequence PKPPGKCSHGGHFDRSSSQPPRGGINKDSTSPGFSP. The 194-residue stretch at 313–506 folds into the VWFA domain; it reads ASSLSFVLDT…SMAALVTLPL (194 aa).

As to expression, expressed at low level in different cell lines.

It is found in the secreted. The chain is von Willebrand factor A domain-containing protein 7 (VWA7) from Homo sapiens (Human).